Reading from the N-terminus, the 443-residue chain is Light-independent protochlorophyllide reductase subunit N (443 aa).

3 residues coordinate [4Fe-4S] cluster: C15, C40, and C99.

This sequence belongs to the BchN/ChlN family. In terms of assembly, protochlorophyllide reductase is composed of three subunits; BchL, BchN and BchB. Forms a heterotetramer of two BchB and two BchN subunits. [4Fe-4S] cluster is required as a cofactor.

It catalyses the reaction chlorophyllide a + oxidized 2[4Fe-4S]-[ferredoxin] + 2 ADP + 2 phosphate = protochlorophyllide a + reduced 2[4Fe-4S]-[ferredoxin] + 2 ATP + 2 H2O. The protein operates within porphyrin-containing compound metabolism; bacteriochlorophyll biosynthesis (light-independent). Component of the dark-operative protochlorophyllide reductase (DPOR) that uses Mg-ATP and reduced ferredoxin to reduce ring D of protochlorophyllide (Pchlide) to form chlorophyllide a (Chlide). This reaction is light-independent. The NB-protein (BchN-BchB) is the catalytic component of the complex. This chain is Light-independent protochlorophyllide reductase subunit N, found in Heliobacterium modesticaldum (strain ATCC 51547 / Ice1).